Reading from the N-terminus, the 47-residue chain is Snake venom metalloproteinase jararafibrase-4 (47 aa).

The region spanning 6 to 47 (RYIELFLVVDHGMFMKYNGNSDKIYYYIHQMVNIMKXAYXYL) is the Peptidase M12B domain. Glutamate 9 contacts Ca(2+).

This sequence belongs to the venom metalloproteinase (M12B) family. Monomer. The cofactor is Zn(2+). In terms of tissue distribution, expressed by the venom gland.

The protein localises to the secreted. With respect to regulation, inhibited by 1,10-phenanthroline and EDTA. In terms of biological role, the metalloproteinase is a probable venom zinc protease that induces local hemorrhage in the skin of rats. Degrades type-IV collagen, gelatin, laminin and fibronectin. Has fibrinolytic activities. Has high hemagglutinating activity on red blood cells. Cleaves insulin B chain at 29-His-|-Leu-30, and 38-Ala-|-Leu-39 bonds. The chain is Snake venom metalloproteinase jararafibrase-4 from Bothrops jararaca (Jararaca).